Here is a 217-residue protein sequence, read N- to C-terminus: Large ribosomal subunit protein uL3 (217 aa).

The protein belongs to the universal ribosomal protein uL3 family. Part of the 50S ribosomal subunit. Forms a cluster with proteins L14 and L19.

Its function is as follows. One of the primary rRNA binding proteins, it binds directly near the 3'-end of the 23S rRNA, where it nucleates assembly of the 50S subunit. The sequence is that of Large ribosomal subunit protein uL3 from Mycobacterium ulcerans (strain Agy99).